The chain runs to 432 residues: Probable protein phosphatase 2C 33 (432 aa).

In terms of domain architecture, PPM-type phosphatase spans 27–298; the sequence is GGGSERPLVR…DDTTCVVVDI (272 aa). D74, G75, D250, and D289 together coordinate Mn(2+).

It belongs to the PP2C family. It depends on Mg(2+) as a cofactor. Requires Mn(2+) as cofactor.

The enzyme catalyses O-phospho-L-seryl-[protein] + H2O = L-seryl-[protein] + phosphate. The catalysed reaction is O-phospho-L-threonyl-[protein] + H2O = L-threonyl-[protein] + phosphate. This chain is Probable protein phosphatase 2C 33, found in Oryza sativa subsp. japonica (Rice).